The following is a 313-amino-acid chain: GTP cyclohydrolase MptA (313 aa).

Belongs to the GTP cyclohydrolase IV family. In terms of assembly, homodimer. Requires Fe(2+) as cofactor.

The catalysed reaction is GTP + H2O = 7,8-dihydroneopterin 2',3'-cyclic phosphate + formate + diphosphate + H(+). It functions in the pathway cofactor biosynthesis; 5,6,7,8-tetrahydromethanopterin biosynthesis. Functionally, converts GTP to 7,8-dihydro-D-neopterin 2',3'-cyclic phosphate, the first intermediate in the biosynthesis of coenzyme methanopterin. The protein is GTP cyclohydrolase MptA of Methanosphaera stadtmanae (strain ATCC 43021 / DSM 3091 / JCM 11832 / MCB-3).